We begin with the raw amino-acid sequence, 481 residues long: Glutamyl-tRNA(Gln) amidotransferase subunit A (481 aa).

Active-site charge relay system residues include Lys74 and Ser149. Ser173 (acyl-ester intermediate) is an active-site residue.

This sequence belongs to the amidase family. GatA subfamily. As to quaternary structure, heterotrimer of A, B and C subunits.

It carries out the reaction L-glutamyl-tRNA(Gln) + L-glutamine + ATP + H2O = L-glutaminyl-tRNA(Gln) + L-glutamate + ADP + phosphate + H(+). Functionally, allows the formation of correctly charged Gln-tRNA(Gln) through the transamidation of misacylated Glu-tRNA(Gln) in organisms which lack glutaminyl-tRNA synthetase. The reaction takes place in the presence of glutamine and ATP through an activated gamma-phospho-Glu-tRNA(Gln). This is Glutamyl-tRNA(Gln) amidotransferase subunit A from Francisella tularensis subsp. mediasiatica (strain FSC147).